The sequence spans 405 residues: Metallophosphoesterase 1 (405 aa).

Residues 31-51 form a helical membrane-spanning segment; sequence IFGSILLVFFFCEFLVYYLVI. A divalent metal cation contacts are provided by D78, D120, N158, H261, H315, and H317. A helical transmembrane segment spans residues 369 to 389; it reads IIYIYCTASVLLTGYVLACLW.

Belongs to the metallophosphoesterase superfamily. MPPE1 family. It depends on Mn(2+) as a cofactor.

The protein localises to the endoplasmic reticulum-Golgi intermediate compartment membrane. Metallophosphoesterase that catalyzes the removal of a side-chain ethanolamine-phosphate (EtNP) from the second mannose of the GPI-anchor protein intermediate. Participates in the glycan remodeling steps of GPI-anchor maturation to allow an efficient transport of GPI-anchor proteins from the endoplasmic reticulum to the Golgi. The protein is Metallophosphoesterase 1 of Xenopus laevis (African clawed frog).